Consider the following 131-residue polypeptide: Biogenesis of lysosome-related organelles complex 1 subunit 5 (131 aa).

The protein belongs to the BLOC1S5 family. In terms of assembly, component of the biogenesis of lysosome-related organelles complex-1 (BLOC-1) composed at least of blos-1, blos-2, blos-4, dsbn-1, glo-2, mutd-1 and snpn-1.

In terms of biological role, component of the biogenesis of lysosome-related organelles complex-1 (BLOC-1) involved in gut granule biogenesis. In Caenorhabditis elegans, this protein is Biogenesis of lysosome-related organelles complex 1 subunit 5 (mutd-1).